Reading from the N-terminus, the 194-residue chain is MNANDASNTCNGSNDSINDSDFPARSGCASFVSRLFAGSTLDEKVIDLLVDSVESQGLRRLESPSPTVLRSLSKFISDIPEENLTSLEEDAMDTKTGELVKCIRFPTLVTELTGGGKISVESKKLLGTEVLNWFRVQHDVRRTKIIVKAPIFSDGRKLSTQHEAIRYTREDVLMLIVLTWRFLQYKLKDEEIIY.

This sequence belongs to the mimivirus L114/R131 family.

This is an uncharacterized protein from Acanthamoeba polyphaga mimivirus (APMV).